The following is a 214-amino-acid chain: Orotate phosphoribosyltransferase (214 aa).

Lysine 26 contacts 5-phospho-alpha-D-ribose 1-diphosphate. Position 34–35 (34–35) interacts with orotate; the sequence is FF. 5-phospho-alpha-D-ribose 1-diphosphate contacts are provided by residues 72-73, arginine 99, lysine 100, lysine 103, histidine 105, and 124-132; these read YK and DDVITAGTA. The orotate site is built by threonine 128 and arginine 156.

Belongs to the purine/pyrimidine phosphoribosyltransferase family. PyrE subfamily. Homodimer. Requires Mg(2+) as cofactor.

The catalysed reaction is orotidine 5'-phosphate + diphosphate = orotate + 5-phospho-alpha-D-ribose 1-diphosphate. It functions in the pathway pyrimidine metabolism; UMP biosynthesis via de novo pathway; UMP from orotate: step 1/2. Its function is as follows. Catalyzes the transfer of a ribosyl phosphate group from 5-phosphoribose 1-diphosphate to orotate, leading to the formation of orotidine monophosphate (OMP). This Pseudoalteromonas translucida (strain TAC 125) protein is Orotate phosphoribosyltransferase.